A 218-amino-acid polypeptide reads, in one-letter code: Ras-related protein RabT2 (218 aa).

GTP is bound at residue 32–39; that stretch reads GDYKTGKG. The Effector region motif lies at 54-61; it reads VSSIGVDF. GTP-binding positions include 80-84 and 140-143; these read DANSC and NKCD. Cys-215 is subject to Cysteine methyl ester. Cys-215 is lipidated: S-geranylgeranyl cysteine. The propeptide at 216-218 is removed in mature form; it reads NIL.

The protein belongs to the small GTPase superfamily. Rab family.

It is found in the cell membrane. The chain is Ras-related protein RabT2 (rabT2) from Dictyostelium discoideum (Social amoeba).